Reading from the N-terminus, the 1070-residue chain is DNA-directed RNA polymerase subunit beta (1070 aa).

The protein belongs to the RNA polymerase beta chain family. In terms of assembly, in plastids the minimal PEP RNA polymerase catalytic core is composed of four subunits: alpha, beta, beta', and beta''. When a (nuclear-encoded) sigma factor is associated with the core the holoenzyme is formed, which can initiate transcription.

Its subcellular location is the plastid. It is found in the chloroplast. The enzyme catalyses RNA(n) + a ribonucleoside 5'-triphosphate = RNA(n+1) + diphosphate. Functionally, DNA-dependent RNA polymerase catalyzes the transcription of DNA into RNA using the four ribonucleoside triphosphates as substrates. This Daucus carota (Wild carrot) protein is DNA-directed RNA polymerase subunit beta.